The following is a 131-amino-acid chain: Holo-[acyl-carrier-protein] synthase (131 aa).

Residues Asp8 and Glu59 each coordinate Mg(2+).

This sequence belongs to the P-Pant transferase superfamily. AcpS family. Requires Mg(2+) as cofactor.

The protein localises to the cytoplasm. The catalysed reaction is apo-[ACP] + CoA = holo-[ACP] + adenosine 3',5'-bisphosphate + H(+). Its function is as follows. Transfers the 4'-phosphopantetheine moiety from coenzyme A to a Ser of acyl-carrier-protein. In Rickettsia conorii (strain ATCC VR-613 / Malish 7), this protein is Holo-[acyl-carrier-protein] synthase.